The sequence spans 234 residues: Transcriptional activator protein TraR (234 aa).

The HTH luxR-type domain occupies 167-232 (TAEDAAWLDP…HLTALAIKRK (66 aa)). Residues 191-210 (MEEIADVEEVKYNSVRVKLR) constitute a DNA-binding region (H-T-H motif).

This sequence belongs to the autoinducer-regulated transcriptional regulatory protein family.

Functionally, positive regulation of conjugal transfer of Ti plasmids. The protein is Transcriptional activator protein TraR (traR) of Agrobacterium vitis (Rhizobium vitis).